The chain runs to 836 residues: ATP-binding cassette sub-family B member 6 (836 aa).

The Lumenal portion of the chain corresponds to 1 to 26 (MVTVGNYCEAEGPAGPAWTQNGLSPC). The interval 1–205 (MVTVGNYCEA…SGGLFILGLW (205 aa)) is required for the lysosomal targeting. The interval 1-236 (MVTVGNYCEA…RNQGRSTDPR (236 aa)) is required for ATPase activity. The cysteines at positions 8 and 26 are disulfide-linked. The helical transmembrane segment at 27 to 47 (FFYTLVPSTLMTLGVLALVLV) threads the bilayer. Residues 48-72 (LPCRRREVPAGTEELSWAAGPRVAP) lie on the Cytoplasmic side of the membrane. The helical transmembrane segment at 73-93 (YALQLSLAILQMALPLASLAG) threads the bilayer. The Lumenal portion of the chain corresponds to 94–106 (RVGTARGVRLPGY). Residues 107 to 127 (LLLASVLESLASACGLWLLVV) form a helical membrane-spanning segment. The Cytoplasmic segment spans residues 128 to 147 (ERSQARQSLAMGVWMKFRHS). Residues 148–168 (LGLLLLWTVTFAAENLVLVSW) traverse the membrane as a helical segment. The Lumenal portion of the chain corresponds to 169–185 (NSPQWWWSRADLGQQVQ). The helical transmembrane segment at 186–206 (FGLWVLRYMTSGGLFILGLWA) threads the bilayer. The Cytoplasmic portion of the chain corresponds to 207-264 (PGLRPQSYTLHVNEEDQDGGRNQGRSTDPRSTWRDLGRKLRLLSGYLWPRGSPSLQLT). Residues 265–285 (VLLCMGLMGLDRALNVLVPIF) form a helical membrane-spanning segment. One can recognise an ABC transmembrane type-1 domain in the interval 265-556 (VLLCMGLMGL…FGTYYRMIQT (292 aa)). The Lumenal segment spans residues 286-305 (YRDIVNLLTSKAPWSSLAWT). Residues 306–326 (VTTYVFLKFLQGGGTGSTGFV) form a helical membrane-spanning segment. Residues 327 to 375 (SNLRTFLWIRVQQFTSRGVELRLFSHLHELSLRWHLGRRTGEVLRIVDR) are Cytoplasmic-facing. The chain crosses the membrane as a helical span at residues 376–396 (GTSSVTGLLSYLVFNIIPTLA). Position 397 (D397) is a topological domain, lumenal. A helical membrane pass occupies residues 398-418 (IIIGIIYFSMFFNAWFGLIVF). The Cytoplasmic segment spans residues 419-499 (LCMSLYLILT…STASLVLLNQ (81 aa)). A helical transmembrane segment spans residues 500 to 520 (TQNMVIGFGLLAGSLLCAYFV). The Lumenal segment spans residues 521–529 (SERRLQVGD). Residues 530-550 (FVLFGTYITQLYMPLNWFGTY) form a helical membrane-spanning segment. At 551–836 (YRMIQTNFID…QGQETVPEDS (286 aa)) the chain is on the cytoplasmic side. An ABC transporter domain is found at 590–824 (VEFENVHFSY…GGVYAEMWQL (235 aa)). ATP contacts are provided by residues Y599 and 623 to 634 (GPSGAGKSTILR).

The protein belongs to the ABC transporter superfamily. ABCB family. Heavy Metal importer (TC 3.A.1.210) subfamily. In terms of assembly, homodimer. In terms of processing, N-glycosylated. As to expression, ubiquitously expressed. Highly expressed in testis by meiotic pachytene spermatocytes and post-meiotic early spermatids.

The protein resides in the cell membrane. Its subcellular location is the mitochondrion outer membrane. The protein localises to the endoplasmic reticulum membrane. It is found in the golgi apparatus membrane. It localises to the endosome membrane. The protein resides in the lysosome membrane. Its subcellular location is the late endosome membrane. The protein localises to the early endosome membrane. It is found in the secreted. It localises to the extracellular exosome. The protein resides in the mitochondrion. Its subcellular location is the endosome. The protein localises to the multivesicular body membrane. It is found in the melanosome membrane. The enzyme catalyses heme b(in) + ATP + H2O = heme b(out) + ADP + phosphate + H(+). The catalysed reaction is coproporphyrin III(in) + ATP + H2O = coproporphyrin III(out) + ADP + phosphate + H(+). It catalyses the reaction pheophorbide a(in) + ATP + H2O = pheophorbide a(out) + ADP + phosphate + H(+). It carries out the reaction coproporphyrinogen III(in) + ATP + H2O = coproporphyrinogen III(out) + ADP + phosphate + H(+). The enzyme catalyses protoporphyrin IX(in) + ATP + H2O = protoporphyrin IX(out) + ADP + phosphate + H(+). The catalysed reaction is coproporphyrin I(in) + ATP + H2O = coproporphyrin I(out) + ADP + phosphate + H(+). It catalyses the reaction uroporphyrin I(in) + ATP + H2O = uroporphyrin I(out) + ADP + phosphate + H(+). It carries out the reaction uroporphyrin III(in) + ATP + H2O = uroporphyrin III(out) + ADP + phosphate + H(+). In terms of biological role, ATP-dependent transporter that catalyzes the transport of a broad-spectrum of porphyrins from the cytoplasm to the extracellular space through the plasma membrane or into the vesicle lumen. May also function as an ATP-dependent importer of porphyrins from the cytoplasm into the mitochondria, in turn may participate in the de novo heme biosynthesis regulation and in the coordination of heme and iron homeostasis during phenylhydrazine stress. May play a key role in the early steps of melanogenesis producing PMEL amyloid fibrils. In vitro, it confers to cells a resistance to toxic metal such as arsenic and cadmium and against chemotherapeutics agent such as 5-fluorouracil, SN-38 and vincristin. In addition may play a role in the transition metal homeostasis. The chain is ATP-binding cassette sub-family B member 6 from Rattus norvegicus (Rat).